The primary structure comprises 339 residues: tRNA N6-adenosine threonylcarbamoyltransferase (339 aa).

Fe cation contacts are provided by histidine 112 and histidine 116. Residues 135 to 139 (LVSGG), aspartate 168, glycine 181, and asparagine 273 each bind substrate. Aspartate 301 contributes to the Fe cation binding site.

This sequence belongs to the KAE1 / TsaD family. It depends on Fe(2+) as a cofactor.

The protein resides in the cytoplasm. The enzyme catalyses L-threonylcarbamoyladenylate + adenosine(37) in tRNA = N(6)-L-threonylcarbamoyladenosine(37) in tRNA + AMP + H(+). Its function is as follows. Required for the formation of a threonylcarbamoyl group on adenosine at position 37 (t(6)A37) in tRNAs that read codons beginning with adenine. Is involved in the transfer of the threonylcarbamoyl moiety of threonylcarbamoyl-AMP (TC-AMP) to the N6 group of A37, together with TsaE and TsaB. TsaD likely plays a direct catalytic role in this reaction. The sequence is that of tRNA N6-adenosine threonylcarbamoyltransferase from Coxiella burnetii (strain RSA 493 / Nine Mile phase I).